Consider the following 383-residue polypeptide: 8-amino-7-oxononanoate synthase (383 aa).

R27 and R34 together coordinate substrate. 114 to 115 (GY) provides a ligand contact to pyridoxal 5'-phosphate. Residue H139 participates in substrate binding. Residues S187, 212–215 (DDAH), and 232–235 (TLSK) each bind pyridoxal 5'-phosphate. K235 carries the N6-(pyridoxal phosphate)lysine modification. T344 is a binding site for substrate.

Belongs to the class-II pyridoxal-phosphate-dependent aminotransferase family. BioF subfamily. As to quaternary structure, homodimer. Pyridoxal 5'-phosphate serves as cofactor.

It carries out the reaction 6-carboxyhexanoyl-[ACP] + L-alanine + H(+) = (8S)-8-amino-7-oxononanoate + holo-[ACP] + CO2. It functions in the pathway cofactor biosynthesis; biotin biosynthesis. Functionally, catalyzes the decarboxylative condensation of pimeloyl-[acyl-carrier protein] and L-alanine to produce 8-amino-7-oxononanoate (AON), [acyl-carrier protein], and carbon dioxide. This chain is 8-amino-7-oxononanoate synthase, found in Methylorubrum extorquens (strain PA1) (Methylobacterium extorquens).